Reading from the N-terminus, the 316-residue chain is Coiled-coil domain-containing protein 130 homolog (316 aa).

Residues 182-203 (ANSRLRAEFRQQKKEINGQQEL) are a coiled coil. The disordered stretch occupies residues 287–316 (KLEETTSSATNEKPISLVGDYSSSDNDSNG).

Belongs to the CWC16 family.

This is Coiled-coil domain-containing protein 130 homolog from Drosophila melanogaster (Fruit fly).